Here is a 217-residue protein sequence, read N- to C-terminus: Cytidylate kinase (217 aa).

An ATP-binding site is contributed by 9-17 (GPSSSGKSS).

Belongs to the cytidylate kinase family. Type 1 subfamily.

The protein localises to the cytoplasm. The catalysed reaction is CMP + ATP = CDP + ADP. It catalyses the reaction dCMP + ATP = dCDP + ADP. The sequence is that of Cytidylate kinase from Mycoplasma genitalium (strain ATCC 33530 / DSM 19775 / NCTC 10195 / G37) (Mycoplasmoides genitalium).